The following is an 84-amino-acid chain: Cell division topological specificity factor (84 aa).

Belongs to the MinE family.

Prevents the cell division inhibition by proteins MinC and MinD at internal division sites while permitting inhibition at polar sites. This ensures cell division at the proper site by restricting the formation of a division septum at the midpoint of the long axis of the cell. The protein is Cell division topological specificity factor of Ralstonia nicotianae (strain ATCC BAA-1114 / GMI1000) (Ralstonia solanacearum).